A 598-amino-acid chain; its full sequence is Jacalin-related lectin 17 (598 aa).

Residues 1-23 (MAQRLEAEGNKNFKGKSKWDDGS) form a disordered region. 4 Jacalin-type lectin domains span residues 2-148 (AQRL…YVTW), 151-293 (PTKL…YFTT), 295-445 (PFTK…HFCP), and 452-595 (GEKV…HVLP).

This sequence belongs to the jacalin lectin family.

This Arabidopsis thaliana (Mouse-ear cress) protein is Jacalin-related lectin 17 (JAL17).